Here is a 480-residue protein sequence, read N- to C-terminus: RNA-splicing ligase RtcB homolog (480 aa).

Positions 93, 96, 202, 234, and 328 each coordinate Mn(2+). GMP is bound at residue 201-205 (NHYTE). GMP contacts are provided by residues 328–329 (HN), 377–380 (GGTM), Ser-384, 403–406 (HGAG), and Lys-479. The active-site GMP-histidine intermediate is the His-403.

Belongs to the RtcB family. As to quaternary structure, catalytic component of the tRNA-splicing ligase complex. The cofactor is Mn(2+).

The catalysed reaction is a 3'-end 3'-phospho-ribonucleotide-RNA + a 5'-end dephospho-ribonucleoside-RNA + GTP = a ribonucleotidyl-ribonucleotide-RNA + GMP + diphosphate. It catalyses the reaction a 3'-end 2',3'-cyclophospho-ribonucleotide-RNA + a 5'-end dephospho-ribonucleoside-RNA + GTP + H2O = a ribonucleotidyl-ribonucleotide-RNA + GMP + diphosphate + H(+). Its function is as follows. Catalytic subunit of the tRNA-splicing ligase complex that acts by directly joining spliced tRNA halves to mature-sized tRNAs by incorporating the precursor-derived splice junction phosphate into the mature tRNA as a canonical 3',5'-phosphodiester. May act as an RNA ligase with broad substrate specificity, and may function toward other RNAs. The sequence is that of RNA-splicing ligase RtcB homolog from Thalassiosira pseudonana (Marine diatom).